Reading from the N-terminus, the 807-residue chain is Putative transmembrane protein ORF807 (807 aa).

Helical transmembrane passes span 210 to 230, 234 to 254, 270 to 290, 459 to 479, and 657 to 677; these read VLMLICLLIYAGCYASYSDIL, GLSTVGAGVNAKVPVTAIVYF, VTIQLYALIWVGISTTNFVIL, ILIGVGAVALIVIGTVALVLT, and VALLSAIASILVNMFLFMPLV.

The protein localises to the host membrane. The sequence is that of Putative transmembrane protein ORF807 from Acidianus filamentous virus 1 (isolate United States/Yellowstone) (AFV-1).